The sequence spans 123 residues: Large ribosomal subunit protein uL14 (123 aa).

This sequence belongs to the universal ribosomal protein uL14 family. As to quaternary structure, part of the 50S ribosomal subunit. Forms a cluster with proteins L3 and L19. In the 70S ribosome, L14 and L19 interact and together make contacts with the 16S rRNA in bridges B5 and B8.

In terms of biological role, binds to 23S rRNA. Forms part of two intersubunit bridges in the 70S ribosome. The sequence is that of Large ribosomal subunit protein uL14 from Wigglesworthia glossinidia brevipalpis.